Consider the following 690-residue polypeptide: Protein arginine N-methyltransferase 7 (690 aa).

SAM-dependent MTase PRMT-type domains are found at residues 14–357 (ENSW…YSLW) and 366–690 (AKSV…QKKP).

The protein belongs to the class I-like SAM-binding methyltransferase superfamily. Protein arginine N-methyltransferase family. PRMT7 subfamily.

In terms of biological role, essential arginine methyltransferase that can both catalyze the formation of omega-N monomethylarginine (MMA) and symmetrical dimethylarginine (sDMA). Specifically mediates the symmetrical dimethylation of arginine residues in the small nuclear ribonucleoproteins SmD1 and SmD3. This chain is Protein arginine N-methyltransferase 7 (Art7), found in Drosophila ananassae (Fruit fly).